We begin with the raw amino-acid sequence, 81 residues long: Sulfur carrier protein TusA (81 aa).

Residue cysteine 19 is the Cysteine persulfide intermediate of the active site.

The protein belongs to the sulfur carrier protein TusA family.

Its subcellular location is the cytoplasm. Functionally, sulfur carrier protein which probably makes part of a sulfur-relay system. The polypeptide is Sulfur carrier protein TusA (Shewanella baltica (strain OS185)).